Here is a 138-residue protein sequence, read N- to C-terminus: uncharacterized protein (138 aa).

3 helical membrane passes run 17–37 (LIVSTIYIVLFFAILNLTVFF), 43–63 (INLILKNSCVVSFVVVWLLVC), and 117–137 (FWWMNFSLYLLGSLISIVVSL).

The protein localises to the cell membrane. This is an uncharacterized protein from Mycoplasma pneumoniae (strain ATCC 29342 / M129 / Subtype 1) (Mycoplasmoides pneumoniae).